The sequence spans 781 residues: Protein argonaute (781 aa).

Residues 110-194 form the PAZ domain; that stretch reads SMNELLTERR…RHNDYCNSVM (85 aa). The region spanning 436 to 760 is the Piwi domain; that stretch reads LVVIVIPGPK…LSKFCGEVLR (325 aa).

The protein belongs to the argonaute family. Ago subfamily. In terms of assembly, interacts with miR2. Highly specific binding to the mRNA m7G-cap. May be a component of the RNA-induced silencing complex (RISC), a sequence-specific, multicomponent nuclease that destroys or silences messenger RNAs homologous to the silencing trigger.

The protein localises to the cytoplasm. Its function is as follows. Plays an essential role in growth and, with Dicer, also involved in microRNA (miRNA)-mediated translational repression. The RNA interference pathway is implicated in antigenic variation having a role in regulation of variant-specific surface protein (VSP)-coding gene expression. Several VSP genes are transcribed but only transcripts encoding the VSP to be expressed accumulate. Antisense RNAs corresponding to the silenced VSP genes are detected. In Giardia intestinalis (Giardia lamblia), this protein is Protein argonaute.